The following is a 285-amino-acid chain: S-methyl-5'-thioadenosine phosphorylase (285 aa).

Phosphate-binding positions include S10, 52–53 (RH), and 85–86 (TA). Position 188 (M188) interacts with substrate. T189 provides a ligand contact to phosphate. 212–214 (DYD) contacts substrate.

The protein belongs to the PNP/MTAP phosphorylase family. MTAP subfamily. Homotrimer.

Its subcellular location is the cytoplasm. The protein localises to the nucleus. The catalysed reaction is S-methyl-5'-thioadenosine + phosphate = 5-(methylsulfanyl)-alpha-D-ribose 1-phosphate + adenine. Its pathway is amino-acid biosynthesis; L-methionine biosynthesis via salvage pathway; S-methyl-5-thio-alpha-D-ribose 1-phosphate from S-methyl-5'-thioadenosine (phosphorylase route): step 1/1. Catalyzes the reversible phosphorylation of S-methyl-5'-thioadenosine (MTA) to adenine and 5-methylthioribose-1-phosphate. Involved in the breakdown of MTA, a major by-product of polyamine biosynthesis. Responsible for the first step in the methionine salvage pathway after MTA has been generated from S-adenosylmethionine. Has broad substrate specificity with 6-aminopurine nucleosides as preferred substrates. This chain is S-methyl-5'-thioadenosine phosphorylase, found in Caenorhabditis briggsae.